The primary structure comprises 523 residues: Cytochrome P450 monooxygenase bsc5 (523 aa).

The helical transmembrane segment at 16-36 (MQLHWTVLGLLPVLFIAILGP) threads the bilayer. Residues Asn178, Asn281, and Asn403 are each glycosylated (N-linked (GlcNAc...) asparagine). Cys459 lines the heme pocket.

The protein belongs to the cytochrome P450 family. It depends on heme as a cofactor.

The protein resides in the membrane. Its pathway is mycotoxin biosynthesis. In terms of biological role, cytochrome P450 monooxygenase; part of the gene cluster that mediates the biosynthesis of the diterpene glucoside brassicicene C. In the first step of the brassicicene C biosynthesis, the bifunctional diterpene synthase bsc8 that possesses both prenyl transferase and terpene cyclase activity, converts isopentenyl diphosphate and dimethylallyl diphosphate into geranylgeranyl diphosphate (GGDP) that is further converted into fusicocca-2,10(14)-diene, the first precursor for brassicicene C. Fusicocca-2,10(14)-diene is then substrate of cytochrome P450 monooxygenase bsc1 for hydroxylation at the C-8 position. Oxidation at C-16 position to aldehyde is then catalyzed by the cytochrome P450 monooyxygenase bsc7, yielding fusicocca-2,10(14)-diene-8-beta,16-diol. Follows the isomerization of the double bond and reduction of aldehyde to alcohol catalyzed by the short-chain dehydrogenase/reductase bsc3 to yield the diol compound fusicocca-1,10(14)-diene-8 beta,16-diol. The next step is the oxidation at the C-3 position of fusicocca-2,10(14)-diene-8-beta,16-diol catalyzed by the alpha-ketoglutarate dependent dioxygenase bsc9, to produce a triol compound. Methylation of the hydroxy group at position 16 is performed by the methyltransferase bsc6. 16-O-methylation is followed by oxidation at the C-13 position to ketone and an alkyl shift of the methyl group leads to brassicicene C. Although the probable acetyltransferase bsc4 is included in the gene cluster, no acetylation reactions are necessary for brassicicene C biosynthesis. However, the fact that brassicicene E, which is a structurally related compound having an acetoxy group at position 12, was previously isolated from another strain of A.brassicicola suggests that the ATCC 96836 strain might also produce a small amount of brassicicene E. This is Cytochrome P450 monooxygenase bsc5 from Alternaria brassicicola (Dark leaf spot agent).